The chain runs to 208 residues: Cysteine-rich protein 2 (208 aa).

The LIM zinc-binding 1 domain occupies 5–57; that stretch reads CPKCDKTVYFAEKVSSLGKDWHKFCLKCERCNKTLTPGGHAEHDGKPFCHKPC. Residue Lys23 is modified to N6-acetyllysine. A Phosphoserine modification is found at Ser104. One can recognise an LIM zinc-binding 2 domain in the interval 126–178; the sequence is CPRCNKRVYFAEKVTSLGKDWHRPCLRCERCSKTLTPGGHAEHDGQPYCHKPC. An N6-acetyllysine mark is found at Lys138 and Lys144.

Interacts with TGFB1I1. In terms of tissue distribution, expressed more abundantly in liver and kidney of females than that of males. Equally expressed in brain, lung and heart.

This is Cysteine-rich protein 2 (Crip2) from Rattus norvegicus (Rat).